The primary structure comprises 140 residues: ATP synthase epsilon chain (140 aa).

It belongs to the ATPase epsilon chain family. As to quaternary structure, F-type ATPases have 2 components, CF(1) - the catalytic core - and CF(0) - the membrane proton channel. CF(1) has five subunits: alpha(3), beta(3), gamma(1), delta(1), epsilon(1). CF(0) has three main subunits: a, b and c.

Its subcellular location is the cell inner membrane. Functionally, produces ATP from ADP in the presence of a proton gradient across the membrane. This chain is ATP synthase epsilon chain, found in Nitrosomonas europaea (strain ATCC 19718 / CIP 103999 / KCTC 2705 / NBRC 14298).